Reading from the N-terminus, the 200-residue chain is ATP-dependent Clp protease proteolytic subunit (200 aa).

Ser99 acts as the Nucleophile in catalysis. Residue His124 is part of the active site.

The protein belongs to the peptidase S14 family. In terms of assembly, fourteen ClpP subunits assemble into 2 heptameric rings which stack back to back to give a disk-like structure with a central cavity, resembling the structure of eukaryotic proteasomes.

The protein resides in the cytoplasm. It catalyses the reaction Hydrolysis of proteins to small peptides in the presence of ATP and magnesium. alpha-casein is the usual test substrate. In the absence of ATP, only oligopeptides shorter than five residues are hydrolyzed (such as succinyl-Leu-Tyr-|-NHMec, and Leu-Tyr-Leu-|-Tyr-Trp, in which cleavage of the -Tyr-|-Leu- and -Tyr-|-Trp bonds also occurs).. In terms of biological role, cleaves peptides in various proteins in a process that requires ATP hydrolysis. Has a chymotrypsin-like activity. Plays a major role in the degradation of misfolded proteins. The polypeptide is ATP-dependent Clp protease proteolytic subunit (Syntrophomonas wolfei subsp. wolfei (strain DSM 2245B / Goettingen)).